The following is a 702-amino-acid chain: Solute carrier organic anion transporter family member 1B3 (702 aa).

At Met1 to Lys28 the chain is on the cytoplasmic side. The helical transmembrane segment at Met29–Met48 threads the bilayer. Residues Lys49–Gly67 are Extracellular-facing. Residues Leu68–Gly88 form a helical membrane-spanning segment. The Cytoplasmic segment spans residues Ser89–Pro94. Residues Lys95 to Gly119 traverse the membrane as a helical segment. Residues Tyr120–Ser168 lie on the Extracellular side of the membrane. Asn134, Asn145, and Asn151 each carry an N-linked (GlcNAc...) asparagine glycan. Residues His169–Asp197 form a helical membrane-spanning segment. Residues Asp198–Gly216 lie on the Cytoplasmic side of the membrane. The chain crosses the membrane as a helical span at residues Met217 to Ile237. Over Gly238–Val255 the chain is Extracellular. The helical transmembrane segment at Gly256–Pro280 threads the bilayer. Residues Lys281 to Ser331 are Cytoplasmic-facing. A phosphoserine mark is found at Ser293 and Ser295. Residues Ile332–Ile353 traverse the membrane as a helical segment. The Extracellular portion of the chain corresponds to Gly354–His373. Residues Ala374–Ile397 traverse the membrane as a helical segment. Topologically, residues Lys398–Lys401 are cytoplasmic. A helical membrane pass occupies residues Leu402–Tyr425. At Phe426–Tyr537 the chain is on the extracellular side. An N-linked (GlcNAc...) asparagine glycan is attached at Asn445. A Kazal-like domain is found at Asp453 to Glu508. 3 disulfides stabilise this stretch: Cys459/Cys489, Cys465/Cys485, and Cys474/Cys506. Asn503 and Asn516 each carry an N-linked (GlcNAc...) asparagine glycan. A helical membrane pass occupies residues Val538–Val560. The Cytoplasmic portion of the chain corresponds to Lys561 to Ala569. A helical transmembrane segment spans residues Leu570 to Ile595. Residues Asp596–Ser629 lie on the Extracellular side of the membrane. A helical membrane pass occupies residues Ile630–Met647. The Cytoplasmic segment spans residues Lys648–Met695. Ser683 carries the phosphoserine modification.

This sequence belongs to the organo anion transporter (TC 2.A.60) family. Post-translationally, N-glycosylated. In terms of tissue distribution, highly expressed in liver, in particular at the basolateral membrane of hepatocytes near the central vein. Expressed in the placenta. In testis, primarily localized to the basal membrane of Sertoli cells and weakly expressed in Leydig cells and within the tubules.

It is found in the basolateral cell membrane. It localises to the basal cell membrane. The catalysed reaction is estrone 3-sulfate(out) + hydrogencarbonate(in) = estrone 3-sulfate(in) + hydrogencarbonate(out). It carries out the reaction 17beta-estradiol 17-O-(beta-D-glucuronate)(out) = 17beta-estradiol 17-O-(beta-D-glucuronate)(in). It catalyses the reaction taurocholate(out) = taurocholate(in). The enzyme catalyses estrone 3-sulfate(out) = estrone 3-sulfate(in). The catalysed reaction is dehydroepiandrosterone 3-sulfate(out) = dehydroepiandrosterone 3-sulfate(in). It carries out the reaction leukotriene C4(out) = leukotriene C4(in). It catalyses the reaction L-thyroxine(out) = L-thyroxine(in). The enzyme catalyses prostaglandin E2(out) = prostaglandin E2(in). The catalysed reaction is (4E,15E)-bilirubin IXalpha C8-beta-D-glucuronoside(out) = (4E,15E)-bilirubin IXalpha C8-beta-D-glucuronoside(in). It carries out the reaction bilirubin IXalpha bis-beta-D-glucuronoside(out) = bilirubin IXalpha bis-beta-D-glucuronoside(in). In terms of biological role, mediates the Na(+)-independent uptake of organic anions. Shows broad substrate specificity, can transport both organic anions such as bile acid taurocholate (cholyltaurine) and conjugated steroids (17-beta-glucuronosyl estradiol, dehydroepiandrosterone sulfate (DHEAS), and estrone 3-sulfate), as well as eicosanoid leukotriene C4, prostaglandin E2 and L-thyroxine (T4). Hydrogencarbonate/HCO3(-) acts as the probable counteranion that exchanges for organic anions. Shows a pH-sensitive substrate specificity towards sulfated steroids, taurocholate and T4 which may be ascribed to the protonation state of the binding site and leads to a stimulation of substrate transport in an acidic microenvironment. Involved in the clearance of bile acids and organic anions from the liver. Can take up bilirubin glucuronides from plasma into the liver, contributing to the detoxification-enhancing liver-blood shuttling loop. Transports coproporphyrin I and III, by-products of heme synthesis, and may be involved in their hepatic disposition. May contribute to regulate the transport of organic compounds in testes across the blood-testis-barrier. Can transport HMG-CoA reductase inhibitors (also known as statins) such as pitavastatin, a clinically important class of hypolipidemic drugs. May play an important role in plasma and tissue distribution of the structurally diverse chemotherapeutic drugs methotrexate and paclitaxel. May also transport antihypertension agents, such as the angiotensin-converting enzyme (ACE) inhibitor prodrug enalapril, and the highly selective angiotensin II AT1-receptor antagonist valsartan, in the liver. In Homo sapiens (Human), this protein is Solute carrier organic anion transporter family member 1B3 (SLCO1B3).